The primary structure comprises 243 residues: DNA repair protein RecO (243 aa).

It belongs to the RecO family.

Its function is as follows. Involved in DNA repair and RecF pathway recombination. This is DNA repair protein RecO from Beutenbergia cavernae (strain ATCC BAA-8 / DSM 12333 / CCUG 43141 / JCM 11478 / NBRC 16432 / NCIMB 13614 / HKI 0122).